Consider the following 297-residue polypeptide: Phosphoribosylaminoimidazole-succinocarboxamide synthase (297 aa).

Belongs to the SAICAR synthetase family.

The enzyme catalyses 5-amino-1-(5-phospho-D-ribosyl)imidazole-4-carboxylate + L-aspartate + ATP = (2S)-2-[5-amino-1-(5-phospho-beta-D-ribosyl)imidazole-4-carboxamido]succinate + ADP + phosphate + 2 H(+). The protein operates within purine metabolism; IMP biosynthesis via de novo pathway; 5-amino-1-(5-phospho-D-ribosyl)imidazole-4-carboxamide from 5-amino-1-(5-phospho-D-ribosyl)imidazole-4-carboxylate: step 1/2. This is Phosphoribosylaminoimidazole-succinocarboxamide synthase from Corynebacterium glutamicum (strain R).